A 66-amino-acid polypeptide reads, in one-letter code: Large ribosomal subunit protein bL35 (66 aa).

The protein belongs to the bacterial ribosomal protein bL35 family.

The polypeptide is Large ribosomal subunit protein bL35 (Parvibaculum lavamentivorans (strain DS-1 / DSM 13023 / NCIMB 13966)).